Here is a 281-residue protein sequence, read N- to C-terminus: MSNSNIHPTSIIAEGAKLGKNVKVGPYCIIGPEVILHDNVELKSHVVIEGITEIGESTVIYPFASIGQPPQILKYNNERSNTIIGSNNIIREYVTVQAGSQGGGMITRIGNNNLFMVGVHIGHDCKIGNNVVFANYVSLAGHIEVEDYVIIGGLSAVHQYARIGKHSMIGGLSPVGADVIPFGLASGKRAVLEGLNLVGMNRKGFDKAESLNALKIVQEIFLGEGNFADRIKQAQEKYKNNTIVMQIIDFLEHGSNRSFCSFEKTMSLRGELQSNLTKQPN.

Belongs to the transferase hexapeptide repeat family. LpxA subfamily. As to quaternary structure, homotrimer.

The protein resides in the cytoplasm. The enzyme catalyses a (3R)-hydroxyacyl-[ACP] + UDP-N-acetyl-alpha-D-glucosamine = a UDP-3-O-[(3R)-3-hydroxyacyl]-N-acetyl-alpha-D-glucosamine + holo-[ACP]. The protein operates within glycolipid biosynthesis; lipid IV(A) biosynthesis; lipid IV(A) from (3R)-3-hydroxytetradecanoyl-[acyl-carrier-protein] and UDP-N-acetyl-alpha-D-glucosamine: step 1/6. Functionally, involved in the biosynthesis of lipid A, a phosphorylated glycolipid that anchors the lipopolysaccharide to the outer membrane of the cell. This Rickettsia bellii (strain OSU 85-389) protein is Acyl-[acyl-carrier-protein]--UDP-N-acetylglucosamine O-acyltransferase.